Reading from the N-terminus, the 128-residue chain is Sulfurtransferase TusD (128 aa).

Residue Cys78 is the Cysteine persulfide intermediate of the active site.

It belongs to the DsrE/TusD family. As to quaternary structure, heterohexamer, formed by a dimer of trimers. The hexameric TusBCD complex contains 2 copies each of TusB, TusC and TusD. The TusBCD complex interacts with TusE.

It localises to the cytoplasm. Functionally, part of a sulfur-relay system required for 2-thiolation of 5-methylaminomethyl-2-thiouridine (mnm(5)s(2)U) at tRNA wobble positions. Accepts sulfur from TusA and transfers it in turn to TusE. The chain is Sulfurtransferase TusD from Escherichia coli (strain K12 / MC4100 / BW2952).